The primary structure comprises 40 residues: Photosystem II reaction center protein J (40 aa).

The helical transmembrane segment at 10 to 30 threads the bilayer; it reads LWLIGTVAGILVIGLVGIFFY.

This sequence belongs to the PsbJ family. PSII is composed of 1 copy each of membrane proteins PsbA, PsbB, PsbC, PsbD, PsbE, PsbF, PsbH, PsbI, PsbJ, PsbK, PsbL, PsbM, PsbT, PsbX, PsbY, PsbZ, Psb30/Ycf12, at least 3 peripheral proteins of the oxygen-evolving complex and a large number of cofactors. It forms dimeric complexes.

It is found in the plastid. It localises to the chloroplast thylakoid membrane. One of the components of the core complex of photosystem II (PSII). PSII is a light-driven water:plastoquinone oxidoreductase that uses light energy to abstract electrons from H(2)O, generating O(2) and a proton gradient subsequently used for ATP formation. It consists of a core antenna complex that captures photons, and an electron transfer chain that converts photonic excitation into a charge separation. The polypeptide is Photosystem II reaction center protein J (Marchantia polymorpha (Common liverwort)).